Reading from the N-terminus, the 272-residue chain is MICOS complex subunit MIC27 (272 aa).

The N-terminal 24 residues, 1–24 (MAAKVARLAAAASSLPFVCAVYAE), are a transit peptide targeting the mitochondrion. Residues 28 to 107 (SKSQLVKPKQ…YVYLKNPPPD (80 aa)) are Mitochondrial intermembrane-facing. A helical transmembrane segment spans residues 108–126 (FLPRVGIITISGLAGVVLA). Residues 127–134 (RKDSRFKK) lie on the Mitochondrial matrix side of the membrane. Residues 135–152 (IAYPLGLTTLGISVCYPA) traverse the membrane as a helical segment. At 153-272 (QAVVIAKITG…EDVDMYSTRS (120 aa)) the chain is on the mitochondrial intermembrane side. Positions 187-272 (SKLQQESKSV…EDVDMYSTRS (86 aa)) are disordered. 2 stretches are compositionally biased toward polar residues: residues 188 to 198 (KLQQESKSVTQ) and 206 to 245 (ISNV…TVKT).

This sequence belongs to the apolipoprotein O/MICOS complex subunit Mic27 family. Component of the mitochondrial contact site and cristae organizing system (MICOS) complex (also known as MINOS or MitOS complex).

Its subcellular location is the mitochondrion inner membrane. Functionally, component of the MICOS complex, a large protein complex of the mitochondrial inner membrane that plays crucial roles in the maintenance of crista junctions, inner membrane architecture, and formation of contact sites to the outer membrane. The polypeptide is MICOS complex subunit MIC27 (APOOL) (Gallus gallus (Chicken)).